The following is a 206-amino-acid chain: Uridine kinase (206 aa).

An ATP-binding site is contributed by 9 to 16; the sequence is GGSGSGKT.

The protein belongs to the uridine kinase family. In terms of assembly, monomer.

It is found in the cytoplasm. The catalysed reaction is uridine + ATP = UMP + ADP + H(+). The enzyme catalyses cytidine + ATP = CMP + ADP + H(+). It participates in pyrimidine metabolism; CTP biosynthesis via salvage pathway; CTP from cytidine: step 1/3. It functions in the pathway pyrimidine metabolism; UMP biosynthesis via salvage pathway; UMP from uridine: step 1/1. This Borreliella burgdorferi (strain ATCC 35210 / DSM 4680 / CIP 102532 / B31) (Borrelia burgdorferi) protein is Uridine kinase (udk).